A 321-amino-acid polypeptide reads, in one-letter code: MIKLLYPEFWQKRNIIAYLLLPISLIYQFLGYLRASLARPIMLPAKVICVGNCSVGGTGKTQIVMYLAKLLKARNVSFVIVTKAYGSNLKSATTIHQGHTALEVGDEGVILAKYGAVIATKNIKEIVPLINELKPDIIIVDDFLQNPYFHKDFTIVSVDSQRLFGNGFLIPAGPLRQYPNKALDAADLIFLVSSHQDKIPKILTPYVNKLINAQIVPSHNIDKTKNYFAFSGIGNPERFFATLKNYGLNITGYKIFPDHYNYLQADLENLYSLAKEHNATLVTTRKDHVKFNDLNNNIVCLDVELSINHPDLLNEKIFKKA.

Serine 54–threonine 61 is a binding site for ATP.

It belongs to the LpxK family.

It catalyses the reaction a lipid A disaccharide + ATP = a lipid IVA + ADP + H(+). It functions in the pathway glycolipid biosynthesis; lipid IV(A) biosynthesis; lipid IV(A) from (3R)-3-hydroxytetradecanoyl-[acyl-carrier-protein] and UDP-N-acetyl-alpha-D-glucosamine: step 6/6. Its function is as follows. Transfers the gamma-phosphate of ATP to the 4'-position of a tetraacyldisaccharide 1-phosphate intermediate (termed DS-1-P) to form tetraacyldisaccharide 1,4'-bis-phosphate (lipid IVA). This is Tetraacyldisaccharide 4'-kinase from Rickettsia peacockii (strain Rustic).